Here is a 388-residue protein sequence, read N- to C-terminus: Xylose isomerase (388 aa).

Active-site residues include histidine 54 and aspartate 57. Residues glutamate 181, glutamate 217, histidine 220, aspartate 245, aspartate 255, aspartate 257, and aspartate 287 each coordinate Mg(2+).

This sequence belongs to the xylose isomerase family. As to quaternary structure, homotetramer. Requires Mg(2+) as cofactor.

It is found in the cytoplasm. The enzyme catalyses alpha-D-xylose = alpha-D-xylulofuranose. Functionally, involved in D-xylose catabolism. The sequence is that of Xylose isomerase (xylA) from Streptomyces rubiginosus.